Reading from the N-terminus, the 264-residue chain is SPRY domain-containing SOCS box protein 2 (264 aa).

The span at 1-18 shows a compositional bias: polar residues; the sequence is MGQTALARGSSSTPSSHA. The segment at 1-53 is disordered; it reads MGQTALARGSSSTPSSHALYSDLSPPEGLEELLSAPPPDLGAQRHHGWNPKDC. Low complexity predominate over residues 21 to 34; the sequence is SDLSPPEGLEELLS. One can recognise a B30.2/SPRY domain in the interval 26 to 221; the sequence is PEGLEELLSA…VRIRYLGERR (196 aa). Residues 222 to 264 form the SOCS box domain; that stretch reads AEEPQSLLHLSRLCVRHALGDTRLGQISSLPLPPAMKRYLLYK.

The protein belongs to the SPSB family. As to quaternary structure, component of the probable ECS(SPSB2) E3 ubiquitin-protein ligase complex which contains CUL5, RNF7/RBX2, Elongin BC complex and SPSB2. Interacts with CUL5, RNF7, ELOB and ELOC. Interacts with MET. Interacts (via B30.2/SPRY domain) with PAWR; this interaction occurs in association with the Elongin BC complex. Interacts with NOS2.

It localises to the cytoplasm. The protein localises to the cytosol. Its pathway is protein modification; protein ubiquitination. In terms of biological role, substrate recognition component of a SCF-like ECS (Elongin BC-CUL2/5-SOCS-box protein) E3 ubiquitin-protein ligase complex which mediates the ubiquitination and subsequent proteasomal degradation of target proteins. Negatively regulates nitric oxide (NO) production and limits cellular toxicity in activated macrophages by mediating the ubiquitination and proteasomal degradation of NOS2. Acts as a bridge which links NOS2 with the ECS E3 ubiquitin ligase complex components ELOC and CUL5. This Rattus norvegicus (Rat) protein is SPRY domain-containing SOCS box protein 2 (Spsb2).